The sequence spans 210 residues: Somatotropin (210 aa).

The signal sequence occupies residues 1 to 23 (MARALVLLSVVLVSLLVNQGTAS). H38 contributes to the Zn(2+) binding site. C71 and C183 are oxidised to a cystine. A Zn(2+)-binding site is contributed by E192. C200 and C208 are disulfide-bonded.

Belongs to the somatotropin/prolactin family.

It localises to the secreted. Growth hormone plays an important role in growth control. In Ctenopharyngodon idella (Grass carp), this protein is Somatotropin (gh).